We begin with the raw amino-acid sequence, 143 residues long: Large ribosomal subunit protein uL11 (143 aa).

It belongs to the universal ribosomal protein uL11 family. As to quaternary structure, part of the ribosomal stalk of the 50S ribosomal subunit. Interacts with L10 and the large rRNA to form the base of the stalk. L10 forms an elongated spine to which L12 dimers bind in a sequential fashion forming a multimeric L10(L12)X complex. Post-translationally, one or more lysine residues are methylated.

Forms part of the ribosomal stalk which helps the ribosome interact with GTP-bound translation factors. The sequence is that of Large ribosomal subunit protein uL11 from Rhizobium etli (strain CIAT 652).